The following is a 91-amino-acid chain: Cell division topological specificity factor (91 aa).

This sequence belongs to the MinE family.

In terms of biological role, prevents the cell division inhibition by proteins MinC and MinD at internal division sites while permitting inhibition at polar sites. This ensures cell division at the proper site by restricting the formation of a division septum at the midpoint of the long axis of the cell. In Desulfitobacterium hafniense (strain DSM 10664 / DCB-2), this protein is Cell division topological specificity factor.